Here is a 501-residue protein sequence, read N- to C-terminus: Pyruvate dehydrogenase protein X component, mitochondrial (501 aa).

The N-terminal 53 residues, 1-53 (MAASWRLHCNQPLLRYLLGFSSRRSLGLAQGAAAWPVDRGASWRWFHSTQLLQ), are a transit peptide targeting the mitochondrion. A Lipoyl-binding domain is found at 56-132 (PIKVLMPSLS…QLGSLIALMV (77 aa)). Lys-97 bears the N6-lipoyllysine mark. Residues 145-176 (KDVSAPPPVSKPPAPTQPSPQPQIPCPARKEH) form a disordered region. Pro residues predominate over residues 149 to 169 (APPPVSKPPAPTQPSPQPQIP). The 38-residue stretch at 183-220 (RLSPAARNILEKHSLDASQGTATGPRGIFTKEDALKLV) folds into the Peripheral subunit-binding (PSBD) domain. Position 194 is an N6-acetyllysine (Lys-194). Phosphoserine is present on Ser-196. The segment at 228-256 (ITESRPASAPPPSLSASVPPQATAGPSYP) is disordered. Lys-394 is modified (N6-succinyllysine).

Belongs to the 2-oxoacid dehydrogenase family. Part of the inner core of the multimeric pyruvate dehydrogenase complex that is composed of about 48 DLAT and 12 PDHX molecules. This core binds multiple copies of pyruvate dehydrogenase (subunits PDH1A and PDHB, E1), dihydrolipoamide acetyltransferase (DLAT, E2) and lipoamide dehydrogenase (DLD, E3). Interacts with SIRT4. Interacts with DLD. Post-translationally, delipoylated at Lys-97 by SIRT4, delipoylation decreases the PHD complex activity.

The protein localises to the mitochondrion matrix. Its function is as follows. Required for anchoring dihydrolipoamide dehydrogenase (E3) to the dihydrolipoamide transacetylase (E2) core of the pyruvate dehydrogenase complexes of eukaryotes. This specific binding is essential for a functional PDH complex. The chain is Pyruvate dehydrogenase protein X component, mitochondrial (Pdhx) from Mus musculus (Mouse).